Here is a 145-residue protein sequence, read N- to C-terminus: Cell wall synthesis protein CwsA (145 aa).

Residues 104–124 traverse the membrane as a helical segment; that stretch reads WIFAGIAAAILAGGAVAFSIV.

This sequence belongs to the CwsA family. As to quaternary structure, interacts with CrgA and Wag31.

Its subcellular location is the cell membrane. In terms of biological role, required for regulated cell division, cell wall synthesis and the maintenance of cell shape. This Mycobacterium tuberculosis (strain ATCC 25618 / H37Rv) protein is Cell wall synthesis protein CwsA.